The following is a 271-amino-acid chain: Putative phosphoenolpyruvate synthase regulatory protein (271 aa).

151-158 serves as a coordination point for ADP; it reads GVSRSGKT.

It belongs to the pyruvate, phosphate/water dikinase regulatory protein family. PSRP subfamily.

The enzyme catalyses [pyruvate, water dikinase] + ADP = [pyruvate, water dikinase]-phosphate + AMP + H(+). It catalyses the reaction [pyruvate, water dikinase]-phosphate + phosphate + H(+) = [pyruvate, water dikinase] + diphosphate. Functionally, bifunctional serine/threonine kinase and phosphorylase involved in the regulation of the phosphoenolpyruvate synthase (PEPS) by catalyzing its phosphorylation/dephosphorylation. The sequence is that of Putative phosphoenolpyruvate synthase regulatory protein from Paraburkholderia phytofirmans (strain DSM 17436 / LMG 22146 / PsJN) (Burkholderia phytofirmans).